Reading from the N-terminus, the 454-residue chain is CCA-adding enzyme (454 aa).

ATP contacts are provided by Ser53 and Lys56. Ser53 and Lys56 together coordinate CTP. Residues Asp65, Asp67, and Asp119 each coordinate Mg(2+). ATP contacts are provided by His142, Lys161, and Tyr170. CTP is bound by residues His142, Lys161, and Tyr170.

It belongs to the tRNA nucleotidyltransferase/poly(A) polymerase family. Archaeal CCA-adding enzyme subfamily. Homodimer. The cofactor is Mg(2+).

The catalysed reaction is a tRNA precursor + 2 CTP + ATP = a tRNA with a 3' CCA end + 3 diphosphate. It catalyses the reaction a tRNA with a 3' CCA end + 2 CTP + ATP = a tRNA with a 3' CCACCA end + 3 diphosphate. In terms of biological role, catalyzes the addition and repair of the essential 3'-terminal CCA sequence in tRNAs without using a nucleic acid template. Adds these three nucleotides in the order of C, C, and A to the tRNA nucleotide-73, using CTP and ATP as substrates and producing inorganic pyrophosphate. tRNA 3'-terminal CCA addition is required both for tRNA processing and repair. Also involved in tRNA surveillance by mediating tandem CCA addition to generate a CCACCA at the 3' terminus of unstable tRNAs. While stable tRNAs receive only 3'-terminal CCA, unstable tRNAs are marked with CCACCA and rapidly degraded. This Thermococcus gammatolerans (strain DSM 15229 / JCM 11827 / EJ3) protein is CCA-adding enzyme.